A 257-amino-acid polypeptide reads, in one-letter code: Probable transcriptional regulatory protein SRU_2667 (257 aa).

The segment covering 1–15 has biased composition (basic residues); it reads MAGHTRKWAKVKRKK. The segment at 1-25 is disordered; it reads MAGHTRKWAKVKRKKQKDDRRKSKV.

The protein belongs to the TACO1 family.

The protein resides in the cytoplasm. This is Probable transcriptional regulatory protein SRU_2667 from Salinibacter ruber (strain DSM 13855 / M31).